The following is a 106-amino-acid chain: Ribonuclease P protein component 4 (106 aa).

Zn(2+) contacts are provided by cysteine 62, cysteine 65, cysteine 88, and cysteine 91.

Belongs to the eukaryotic/archaeal RNase P protein component 4 family. Consists of a catalytic RNA component and at least 4-5 protein subunits. Zn(2+) serves as cofactor.

Its subcellular location is the cytoplasm. It catalyses the reaction Endonucleolytic cleavage of RNA, removing 5'-extranucleotides from tRNA precursor.. Its function is as follows. Part of ribonuclease P, a protein complex that generates mature tRNA molecules by cleaving their 5'-ends. In Methanocorpusculum labreanum (strain ATCC 43576 / DSM 4855 / Z), this protein is Ribonuclease P protein component 4.